A 284-amino-acid chain; its full sequence is 4-hydroxybenzoate octaprenyltransferase (284 aa).

8 consecutive transmembrane segments (helical) span residues 16–36 (PIGI…ASDG), 40–60 (WTLV…GCAV), 91–111 (LLVA…LNTL), 132–152 (FFAI…PMGF), 157–177 (NTVP…SVAY), 207–227 (AIIM…GWQF), 231–251 (IWFV…YTLI), and 259–279 (CFAA…GVAL).

Belongs to the UbiA prenyltransferase family. It depends on Mg(2+) as a cofactor.

The protein localises to the cell inner membrane. The enzyme catalyses all-trans-octaprenyl diphosphate + 4-hydroxybenzoate = 4-hydroxy-3-(all-trans-octaprenyl)benzoate + diphosphate. It participates in cofactor biosynthesis; ubiquinone biosynthesis. Its function is as follows. Catalyzes the prenylation of para-hydroxybenzoate (PHB) with an all-trans polyprenyl group. Mediates the second step in the final reaction sequence of ubiquinone-8 (UQ-8) biosynthesis, which is the condensation of the polyisoprenoid side chain with PHB, generating the first membrane-bound Q intermediate 3-octaprenyl-4-hydroxybenzoate. The polypeptide is 4-hydroxybenzoate octaprenyltransferase (Janthinobacterium sp. (strain Marseille) (Minibacterium massiliensis)).